A 940-amino-acid polypeptide reads, in one-letter code: Isoleucine--tRNA ligase (940 aa).

Residues 58 to 68 (PYANGSIHIGH) carry the 'HIGH' region motif. Residue Glu-564 participates in L-isoleucyl-5'-AMP binding. The 'KMSKS' region signature appears at 605-609 (KMSKS). Lys-608 is an ATP binding site. Zn(2+) is bound by residues Cys-903, Cys-906, Cys-923, and Cys-926.

The protein belongs to the class-I aminoacyl-tRNA synthetase family. IleS type 1 subfamily. Monomer. Zn(2+) is required as a cofactor.

The protein resides in the cytoplasm. The catalysed reaction is tRNA(Ile) + L-isoleucine + ATP = L-isoleucyl-tRNA(Ile) + AMP + diphosphate. In terms of biological role, catalyzes the attachment of isoleucine to tRNA(Ile). As IleRS can inadvertently accommodate and process structurally similar amino acids such as valine, to avoid such errors it has two additional distinct tRNA(Ile)-dependent editing activities. One activity is designated as 'pretransfer' editing and involves the hydrolysis of activated Val-AMP. The other activity is designated 'posttransfer' editing and involves deacylation of mischarged Val-tRNA(Ile). The chain is Isoleucine--tRNA ligase from Shewanella baltica (strain OS223).